The sequence spans 413 residues: Putative competence-damage inducible protein (413 aa).

The protein belongs to the CinA family.

This Thermoanaerobacter pseudethanolicus (strain ATCC 33223 / 39E) (Clostridium thermohydrosulfuricum) protein is Putative competence-damage inducible protein.